Consider the following 348-residue polypeptide: Dihydroorotase (348 aa).

Zn(2+) is bound by residues H17 and H19. Substrate contacts are provided by residues 19-21 (HLR) and N45. Positions 103, 140, and 178 each coordinate Zn(2+). K103 is subject to N6-carboxylysine. Substrate is bound at residue H140. L223 serves as a coordination point for substrate. Position 251 (D251) interacts with Zn(2+). The active site involves D251. Substrate-binding residues include H255 and A267.

Belongs to the metallo-dependent hydrolases superfamily. DHOase family. Class II DHOase subfamily. As to quaternary structure, homodimer. Requires Zn(2+) as cofactor.

The enzyme catalyses (S)-dihydroorotate + H2O = N-carbamoyl-L-aspartate + H(+). The protein operates within pyrimidine metabolism; UMP biosynthesis via de novo pathway; (S)-dihydroorotate from bicarbonate: step 3/3. Its function is as follows. Catalyzes the reversible cyclization of carbamoyl aspartate to dihydroorotate. This Escherichia coli O6:K15:H31 (strain 536 / UPEC) protein is Dihydroorotase.